Here is a 548-residue protein sequence, read N- to C-terminus: MDLFKIEANYIDIFNKEIYPASIAIANGHIASIEKINATLDEYVLPGFIDAHIHIESSFLVPSNFAHLVVAHGTVATISDPHEIANVNGIDGINFMINNSKKTEFKFFFGAPSCVPALSQEFETSGYVLNDKDIDELMKLDDIYYLAEVMDFKGVINKDIEIINKINSALKRNKVVDGHAPGLSPNLTLKYASSGISTDHECLTIEDARYKLSLGMKILIREGSAAKNFESLHPLISECSKKYCDSLMFCFDDAHPNDILNGHINLIVARAIKHGHDFFDVLKIACINPVLHYKIPVGLLRIGDPADFIITKDIKTFKINKTYINGKLVFNDGISLIPLINEIPINNFNCSKKSISDFKFSTKNKMIPVIKCISNQIITHKTMIDSNLLAPDFQSNIAEDILKIAIINRYKDNSKISIGFIKNFGIRNGAIGSTVAHDSHNIILVGSNDEYLCKAANTIIQNKGGLCALNNEKTIIMELPISGLMSTLSAERVASQYIKLNDFCKNVLGSRLDDPLMTLSFMSLTVVPHLKINDKGLFDVDSFCFVDY.

It belongs to the metallo-dependent hydrolases superfamily. Adenine deaminase family. Mn(2+) is required as a cofactor.

The catalysed reaction is adenine + H2O + H(+) = hypoxanthine + NH4(+). The protein is Adenine deaminase of Borreliella burgdorferi (strain ATCC 35210 / DSM 4680 / CIP 102532 / B31) (Borrelia burgdorferi).